A 100-amino-acid chain; its full sequence is Urease subunit gamma (100 aa).

It belongs to the urease gamma subunit family. As to quaternary structure, heterotrimer of UreA (gamma), UreB (beta) and UreC (alpha) subunits. Three heterotrimers associate to form the active enzyme.

The protein localises to the cytoplasm. It catalyses the reaction urea + 2 H2O + H(+) = hydrogencarbonate + 2 NH4(+). It functions in the pathway nitrogen metabolism; urea degradation; CO(2) and NH(3) from urea (urease route): step 1/1. The sequence is that of Urease subunit gamma from Pseudomonas entomophila (strain L48).